Reading from the N-terminus, the 295-residue chain is Probable WRKY transcription factor 46 (295 aa).

A DNA-binding region (WRKY) is located at residues 98–166 (QENGSIDDGH…YLGNHTCNNI (69 aa)).

This sequence belongs to the WRKY group III family. As to quaternary structure, binds to BZR2/BES1 to cooperatively regulate the expression of target genes. In terms of processing, phosphorylated and destabilized by ASK7/BIN2. In terms of tissue distribution, expressed in guard cells, hypocotyls, and in the vascular tissues of cotyledon and root. Mostly expressed in roots, at lower levels in leaves and petioles, and, to a lower extent, in stems, flowers and siliques.

The protein localises to the nucleus. Functionally, transcription factor involved in the regulation of osmotic stress responses and stomatal movement. Interacts specifically with the W box (5'-(T)TGAC[CT]-3'), a frequently occurring elicitor-responsive cis-acting element. Positive regulator of EDS1-dependent defense against E.amylovora. Together with WRKY70 and WRKY53, promotes resistance to P.syringae, probably by enhancing salicylic acid (SA)- dependent genes. Contributes to the suppression of jasmonic acid (MeJA)-induced expression of PDF1.2. Together with WRKY54 and WRKY70, promotes brassinosteroid (BR)-regulated plant growth but prevent drought response by modulating gene expression. This chain is Probable WRKY transcription factor 46 (WRKY46), found in Arabidopsis thaliana (Mouse-ear cress).